A 356-amino-acid chain; its full sequence is Probable cysteine protease RDL6 (356 aa).

A signal peptide spans 1 to 26 (MGFVRPVCMTILFLLIVFVLSAPSSA). Residues 27–132 (MDLPATSGGH…RRYVPLAGDQ (106 aa)) constitute a propeptide, activation peptide. N-linked (GlcNAc...) asparagine glycosylation is found at Asn-37 and Asn-86. Intrachain disulfides connect Cys-154–Cys-195, Cys-188–Cys-229, and Cys-288–Cys-339. Cys-157 is an active-site residue. Residues His-294 and Asn-314 contribute to the active site.

This sequence belongs to the peptidase C1 family.

Its function is as follows. Probable thiol protease. This Arabidopsis thaliana (Mouse-ear cress) protein is Probable cysteine protease RDL6.